Reading from the N-terminus, the 374-residue chain is UPF0754 membrane protein SAR1937 (374 aa).

2 helical membrane passes run 4-24 (LFIIIFMIVVGAIIGGVTNVI) and 354-374 (SLGFILGGIIGFFQGLVAIFV).

This sequence belongs to the UPF0754 family.

It is found in the cell membrane. The chain is UPF0754 membrane protein SAR1937 from Staphylococcus aureus (strain MRSA252).